An 88-amino-acid polypeptide reads, in one-letter code: N(2)-fixation sustaining protein CowN (88 aa).

It belongs to the CowN family.

Its function is as follows. Is required to sustain N(2)-dependent growth in the presence of low levels of carbon monoxide (CO). Probably acts by protecting the N(2) fixation ability of the nitrogenase complex, which is inactivated in the presence of CO. The sequence is that of N(2)-fixation sustaining protein CowN from Rhodomicrobium vannielii (strain ATCC 17100 / DSM 162 / LMG 4299 / NCIMB 10020 / ATH 3.1.1).